Consider the following 234-residue polypeptide: Endonuclease V (234 aa).

Mg(2+) contacts are provided by aspartate 42 and aspartate 108.

This sequence belongs to the endonuclease V family. Mg(2+) is required as a cofactor.

It is found in the cytoplasm. The enzyme catalyses Endonucleolytic cleavage at apurinic or apyrimidinic sites to products with a 5'-phosphate.. In terms of biological role, DNA repair enzyme involved in the repair of deaminated bases. Selectively cleaves double-stranded DNA at the second phosphodiester bond 3' to a deoxyinosine leaving behind the intact lesion on the nicked DNA. The protein is Endonuclease V of Geotalea uraniireducens (strain Rf4) (Geobacter uraniireducens).